Here is a 458-residue protein sequence, read N- to C-terminus: ATP synthase subunit beta (458 aa).

148–155 is a binding site for ATP; that stretch reads GGAGVGKT.

It belongs to the ATPase alpha/beta chains family. F-type ATPases have 2 components, CF(1) - the catalytic core - and CF(0) - the membrane proton channel. CF(1) has five subunits: alpha(3), beta(3), gamma(1), delta(1), epsilon(1). CF(0) has three main subunits: a(1), b(2) and c(9-12). The alpha and beta chains form an alternating ring which encloses part of the gamma chain. CF(1) is attached to CF(0) by a central stalk formed by the gamma and epsilon chains, while a peripheral stalk is formed by the delta and b chains.

The protein resides in the cell inner membrane. It catalyses the reaction ATP + H2O + 4 H(+)(in) = ADP + phosphate + 5 H(+)(out). Functionally, produces ATP from ADP in the presence of a proton gradient across the membrane. The catalytic sites are hosted primarily by the beta subunits. This is ATP synthase subunit beta from Stutzerimonas stutzeri (strain A1501) (Pseudomonas stutzeri).